The primary structure comprises 171 residues: Orange carotenoid-binding domain-containing protein (171 aa).

An OCP N-terminal domain is found at 21–171; that stretch reads GDAVASTITV…ADMGVDPLAD (151 aa).

Belongs to the orange carotenoid-binding protein family. Requires 3'-hydroxyechinenone as cofactor.

It is found in the cellular thylakoid membrane. Might act as a photo-protectant, protecting against damage induced by excess light via a process known as non-photochemical quenching (NPQ). In Nostoc sp. (strain PCC 7120 / SAG 25.82 / UTEX 2576), this protein is Orange carotenoid-binding domain-containing protein.